We begin with the raw amino-acid sequence, 220 residues long: Large ribosomal subunit protein uL1 (220 aa).

This sequence belongs to the universal ribosomal protein uL1 family. As to quaternary structure, part of the 50S ribosomal subunit.

In terms of biological role, binds directly to 23S rRNA. The L1 stalk is quite mobile in the ribosome, and is involved in E site tRNA release. Functionally, protein L1 is also a translational repressor protein, it controls the translation of the L11 operon by binding to its mRNA. The protein is Large ribosomal subunit protein uL1 of Ehrlichia chaffeensis (strain ATCC CRL-10679 / Arkansas).